Here is a 91-residue protein sequence, read N- to C-terminus: Uteroglobin (91 aa).

The first 21 residues, Met1–Ala21, serve as a signal peptide directing secretion.

It belongs to the secretoglobin family. Antiparallel homodimer; disulfide-linked. Interaction with LMBR1L has been observed in PubMed:16423471, but not in PubMed:23964685. In terms of tissue distribution, club cells (nonciliated cells of the surface epithelium of the pulmonary airways).

It localises to the secreted. Functionally, binds phosphatidylcholine, phosphatidylinositol, polychlorinated biphenyls (PCB) and weakly progesterone, potent inhibitor of phospholipase A2. This chain is Uteroglobin (SCGB1A1), found in Homo sapiens (Human).